A 315-amino-acid chain; its full sequence is Replication factor C small subunit (315 aa).

43 to 50 contributes to the ATP binding site; it reads GSPGVGKT.

The protein belongs to the activator 1 small subunits family. RfcS subfamily. Heteromultimer composed of small subunits (RfcS) and large subunits (RfcL).

Its function is as follows. Part of the RFC clamp loader complex which loads the PCNA sliding clamp onto DNA. The polypeptide is Replication factor C small subunit (Methanococcus maripaludis (strain DSM 14266 / JCM 13030 / NBRC 101832 / S2 / LL)).